A 210-amino-acid chain; its full sequence is Nta operon transcriptional regulator (210 aa).

Residues 1 to 55 (MAVSYHFRPGERINEVELAAQLKVSRTPLREALNRLTTEGFLTTTANKGFFARVL) enclose the HTH gntR-type domain. The segment at residues 15–34 (EVELAAQLKVSRTPLREALN) is a DNA-binding region (H-T-H motif).

Probable regulator for the expression of the NTA monooxygenase subunits. The sequence is that of Nta operon transcriptional regulator (ntaR) from Aminobacter aminovorans (Chelatobacter heintzii).